A 104-amino-acid polypeptide reads, in one-letter code: Precursor of CEP11 (104 aa).

The signal sequence occupies residues 1 to 27; that stretch reads MAKTRRVIYLFLTIVLLFCELIDEAQG. The propeptide occupies 28–85; the sequence is SRFRCHHSEDYSCKKRSSHHHHHHHHHQQQQHHHKDTPPEELQGSIKTRRSKDIYGLN. Residues 37 to 104 form a disordered region; sequence DYSCKKRSSH…SPGVGHLIKT (68 aa). Residues 41 to 62 show a composition bias toward basic residues; sequence KKRSSHHHHHHHHHQQQQHHHK. Residues Pro92 and Pro96 each carry the hydroxyproline modification. Residues 101–104 constitute a propeptide that is removed on maturation; that stretch reads LIKT.

The protein belongs to the C-terminally encoded plant signaling peptide (CEP) family. Interacts with CEP receptors (e.g. CEPR1 and CEPR2). Post-translationally, the mature small signaling peptide is generated by proteolytic processing of the longer precursor. Expressed in lateral root primordia and in lateral roots excluding the meristem region.

It is found in the secreted. The protein localises to the extracellular space. It localises to the apoplast. Functionally, extracellular signaling peptide that may regulate primary root growth rate and systemic nitrogen (N)-demand signaling. Mediates up-regulation of genes involved in N uptake and assimilation pathways. This chain is Precursor of CEP11, found in Arabidopsis thaliana (Mouse-ear cress).